A 304-amino-acid chain; its full sequence is Probable actin-related protein 2/3 complex subunit 2 (304 aa).

The protein belongs to the ARPC2 family. In terms of assembly, component of the Arp2/3 complex.

Its subcellular location is the cytoplasm. The protein localises to the cytoskeleton. In terms of biological role, functions as actin-binding component of the Arp2/3 complex which is involved in regulation of actin polymerization and together with an activating nucleation-promoting factor (NPF) mediates the formation of branched actin networks. Seems to contact the mother actin filament. The protein is Probable actin-related protein 2/3 complex subunit 2 (Arc-p34) of Anopheles gambiae (African malaria mosquito).